The chain runs to 496 residues: MDDKQHTSSSDDERAEIATSNQDQETNSSKRVHLKRWQFISILIGTILITAVITVVAYIFINQKISGLNKTDQSNLNKIENVYKILNSDYYKKQDSDKLSKAAIDGMVKELKDPYSEYLTKEQTKSFNEGVSGDFVGIGAEMQKKNDQIMVTSPMKGSPAERAGIRPKDVITKVNGKSIKGKALDEVVKDVRGKENTEVTLTVQRGSEEKDVKIKREKIHVKSVEYKKKGKVGVITINKFQNDTSGELKDAVLKAHKDGLKKIVLDLRNNPGGLLDEAVKMANIFIDKGKTVVKLEKGKDTEAIQTSNDALKEAKDMDISILVNEGSASASEVFTGALKDYNKAKVYGSKTFGKGVVQTTREFKDGSLLKYTEMKWLTPDGHYIHGKGIKPDVTIDTPKYQSLNVIPNTKTFKVGDDDKNIKTIKIGLSALGYKVDNESTQFDKALENQVKAFQQANKLEVTGEFNKETNNKFTELLVEKANKHDDVLDKLINILK.

Basic and acidic residues predominate over residues 1-16; it reads MDDKQHTSSSDDERAE. Positions 1–27 are disordered; the sequence is MDDKQHTSSSDDERAEIATSNQDQETN. A compositionally biased stretch (polar residues) spans 18 to 27; the sequence is ATSNQDQETN. The chain crosses the membrane as a helical span at residues 39-59; that stretch reads FISILIGTILITAVITVVAYI. In terms of domain architecture, PDZ spans 124-206; sequence TKSFNEGVSG…TEVTLTVQRG (83 aa). Active-site charge relay system residues include S329, D340, and K354.

This sequence belongs to the peptidase S41A family.

It localises to the cell membrane. This chain is Probable CtpA-like serine protease, found in Staphylococcus aureus (strain COL).